The chain runs to 416 residues: Tyrosine--tRNA ligase (416 aa).

Tyrosine 40 contributes to the L-tyrosine binding site. Positions 45-54 match the 'HIGH' region motif; sequence ATAASLHVGH. Positions 177 and 181 each coordinate L-tyrosine. Residues 237–241 carry the 'KMSKS' region motif; sequence KMGKS. Lysine 240 lines the ATP pocket. Residues 351-416 enclose the S4 RNA-binding domain; that stretch reads LSVAHFLVAA…RKKHKLVRLS (66 aa).

The protein belongs to the class-I aminoacyl-tRNA synthetase family. TyrS type 1 subfamily. Homodimer.

The protein resides in the cytoplasm. The enzyme catalyses tRNA(Tyr) + L-tyrosine + ATP = L-tyrosyl-tRNA(Tyr) + AMP + diphosphate + H(+). Its function is as follows. Catalyzes the attachment of tyrosine to tRNA(Tyr) in a two-step reaction: tyrosine is first activated by ATP to form Tyr-AMP and then transferred to the acceptor end of tRNA(Tyr). The protein is Tyrosine--tRNA ligase of Cereibacter sphaeroides (strain KD131 / KCTC 12085) (Rhodobacter sphaeroides).